We begin with the raw amino-acid sequence, 194 residues long: Sigma factor AlgU negative regulatory protein (194 aa).

Residues Leu89–Leu105 traverse the membrane as a helical segment.

The protein belongs to the RseA family.

The protein resides in the cell membrane. Negative regulator of the sigma factor AlgU. Plays a role in the differentiation of P.aeruginosa into the alginate-producing form. Inactivation of mucA causes a switch from the non-mucoid to mucoid state resulting in constitutive expression of alginate biosynthetic genes. The polypeptide is Sigma factor AlgU negative regulatory protein (mucA) (Pseudomonas aeruginosa (strain ATCC 15692 / DSM 22644 / CIP 104116 / JCM 14847 / LMG 12228 / 1C / PRS 101 / PAO1)).